Here is a 242-residue protein sequence, read N- to C-terminus: Small ribosomal subunit protein uS2 (242 aa).

The protein belongs to the universal ribosomal protein uS2 family.

In Aeromonas salmonicida (strain A449), this protein is Small ribosomal subunit protein uS2.